A 550-amino-acid polypeptide reads, in one-letter code: Cytochrome P450 monooxygenase hasH (550 aa).

Residues 39–59 (IGVLASIVVLVTVVIGPKAVI) form a helical membrane-spanning segment. Residue C493 coordinates heme.

The protein belongs to the cytochrome P450 family. It depends on heme as a cofactor.

It is found in the membrane. Its pathway is secondary metabolite biosynthesis. In terms of biological role, cytochrome P450 monooxygenase; part of the gene cluster that mediates the biosynthesis of hexadehydro-astechrome (HAS), a tryptophan-derived iron(III)-complex that acts as a virulence factor in infected mice. Within the pathway, hasH, with the O-methyltransferase hasC and the FAD-linked oxidoreductase hasG, convert the hasE-prenylated Trp-Ala dipeptide into an O-methylated diketopiperazine that is then released from the hasD NRPS. The HAS biosynthesis begins with the synthesis of a tethered Trp-Ala dipeptide by the NRPS hasD. The 7-dimethylallyltryptophan synthase hasE then catalyzes the prenylation of the hasD-tethered tryptophan or the resulting tethered Trp-Ala dipeptide at the C-7 position of the indole moiety. HAS biosynthesis continues via tethered intermediates with the succesive action of the cytochrome P450 monooxygenase hasH, the O-methyltransferase hasC, and the FAD-linked oxidoreductase hasG. The resulting O-methylated diketopiperazine is then released from hasD. Finally, three O-methylated diketopiperazine molecules assemble in a trimeric complex with Fe(III) to produce hexadehydro-astechrome. This is Cytochrome P450 monooxygenase hasH from Aspergillus fumigatus (strain CBS 144.89 / FGSC A1163 / CEA10) (Neosartorya fumigata).